A 66-amino-acid polypeptide reads, in one-letter code: Toxin Tppa2 (66 aa).

An LCN-type CS-alpha/beta domain is found at 1–63 (KDGYLVGNDG…TWSRATNKCG (63 aa)). Disulfide bonds link Cys-11-Cys-62, Cys-15-Cys-37, Cys-23-Cys-43, and Cys-27-Cys-45. A Cysteine amide modification is found at Cys-62.

This sequence belongs to the long (4 C-C) scorpion toxin superfamily. Sodium channel inhibitor family. Beta subfamily. Expressed by the venom gland.

It is found in the secreted. Functionally, beta toxins bind voltage-independently at site-4 of sodium channels (Nav) and shift the voltage of activation toward more negative potentials thereby affecting sodium channel activation and promoting spontaneous and repetitive firing. This is Toxin Tppa2 from Tityus pachyurus (Colombian scorpion).